Consider the following 307-residue polypeptide: Yop proteins translocation protein Q (307 aa).

This sequence belongs to the FliN/MopA/SpaO family.

Component of the Yop secretion machinery. The chain is Yop proteins translocation protein Q (yscQ) from Yersinia pestis.